The primary structure comprises 69 residues: uncharacterized protein (69 aa).

Positions 22 to 48 (LFRKSRELSPIKPVRTPTPPAPTPPPM) are disordered. Positions 37 to 48 (TPTPPAPTPPPM) are enriched in pro residues.

This is an uncharacterized protein from Lepidoptera (butterflies and moths).